Here is a 173-residue protein sequence, read N- to C-terminus: Photosystem I assembly protein Ycf3 (173 aa).

TPR repeat units lie at residues 35–68, 72–105, and 120–153; these read AFVY…EEDT, GYIL…NPRL, and GEKA…APNN.

The protein belongs to the Ycf3 family.

It is found in the cellular thylakoid membrane. Functionally, essential for the assembly of the photosystem I (PSI) complex. May act as a chaperone-like factor to guide the assembly of the PSI subunits. The polypeptide is Photosystem I assembly protein Ycf3 (Nostoc sp. (strain PCC 7120 / SAG 25.82 / UTEX 2576)).